A 279-amino-acid polypeptide reads, in one-letter code: MLTDGSYFHLHLVSDSTGETLITVSRAVAAQYANVSPVEHVYPLVRSQKQLDRVLQEIEESPGIVLFTLLESELVNRLEAKCQQINSPSLSIIGPVMQLFEAYLGASTTGRVGAQHTLNAEYFKRIDALNYSMMHDDGQHVEGLEEADVVLVGVSRTSKTPTSIYLANRGIRTANVPLVAGIPIPHQLETLKKPLVVSLHASPDRLIQVRQNRLLSLGAGAGNDSYIDRQAVTDEVLLARKLSAKYGWSLLDVTRRSIEETAAAIMKLLADRQRQRMSE.

Residue 153–160 (GVSRTSKT) coordinates ADP.

Belongs to the pyruvate, phosphate/water dikinase regulatory protein family. PDRP subfamily.

The enzyme catalyses N(tele)-phospho-L-histidyl/L-threonyl-[pyruvate, phosphate dikinase] + ADP = N(tele)-phospho-L-histidyl/O-phospho-L-threonyl-[pyruvate, phosphate dikinase] + AMP + H(+). It carries out the reaction N(tele)-phospho-L-histidyl/O-phospho-L-threonyl-[pyruvate, phosphate dikinase] + phosphate + H(+) = N(tele)-phospho-L-histidyl/L-threonyl-[pyruvate, phosphate dikinase] + diphosphate. Bifunctional serine/threonine kinase and phosphorylase involved in the regulation of the pyruvate, phosphate dikinase (PPDK) by catalyzing its phosphorylation/dephosphorylation. This is Putative pyruvate, phosphate dikinase regulatory protein from Rhodopseudomonas palustris (strain BisB5).